The sequence spans 967 residues: Serine/threonine-protein kinase 10 (967 aa).

Residues Ser-13 and Ser-20 each carry the phosphoserine modification. The Protein kinase domain occupies 36–294 (WEILGELGDG…AAQLLQHPFV (259 aa)). ATP contacts are provided by residues 42-50 (LGDGAFGKV) and Lys-65. Catalysis depends on Asp-157, which acts as the Proton acceptor. Positions 175-224 (DFGVSAKNLKTLQKRDSFIGTPYWMAPEVVLCETMKDAPYDYKADIWSLG) are activation segment. Thr-185 is subject to Phosphothreonine; by autocatalysis. Ser-191 bears the Phosphoserine; by autocatalysis mark. Disordered stretches follow at residues 317–454 (EIED…RPNS) and 468–498 (GGLE…SMDY). 3 stretches are compositionally biased toward polar residues: residues 339–364 (NHTQ…DSST), 378–393 (PCNQ…NTSP), and 431–454 (TDQA…RPNS). Phosphoserine is present on residues Ser-438, Ser-450, Ser-454, and Ser-485. Residues 486–498 (DCSNLSTSESMDY) are compositionally biased toward polar residues. Phosphoserine is present on residues Ser-514 and Ser-549. Disordered stretches follow at residues 827–866 (INGA…ENQM) and 902–967 (LDES…GDAS). 2 stretches are compositionally biased toward basic and acidic residues: residues 835 to 866 (EQRE…ENQM) and 902 to 947 (LDES…EAET). Thr-951 bears the Phosphothreonine mark.

The protein belongs to the protein kinase superfamily. STE Ser/Thr protein kinase family. STE20 subfamily. Homodimer; homodimerization is required for activation segment autophosphorylation. Post-translationally, autophosphorylates following homodimerization, leading to activation of the protein.

The protein resides in the cell membrane. The catalysed reaction is L-seryl-[protein] + ATP = O-phospho-L-seryl-[protein] + ADP + H(+). It carries out the reaction L-threonyl-[protein] + ATP = O-phospho-L-threonyl-[protein] + ADP + H(+). Inhibited by the pyrrole-indolinone inhibitor SU11274 (K00593): intercalates between the ATP-binding Lys-65 and alpha-C glutamate (Glu-81), resulting in a partial disordering of the lysine side chain. Also specifically inhibited by erlotinib. Slightly inhibited by gefitinib. Serine/threonine-protein kinase involved in regulation of lymphocyte migration. Phosphorylates MSN, and possibly PLK1. Involved in regulation of lymphocyte migration by mediating phosphorylation of ERM proteins such as MSN. Acts as a negative regulator of MAP3K1/MEKK1. May also act as a cell cycle regulator by acting as a polo kinase kinase: mediates phosphorylation of PLK1 in vitro; however such data require additional evidences in vivo. In Rattus norvegicus (Rat), this protein is Serine/threonine-protein kinase 10 (Stk10).